We begin with the raw amino-acid sequence, 84 residues long: MERGYRKVRIGTVVSNKMQKTIVVAVEDRVRHPLYGKTIKRTKKFKVHDENNVCNVGDIVKIMETRPLSKEKRWRLVEIVKRAE.

The protein belongs to the universal ribosomal protein uS17 family. In terms of assembly, part of the 30S ribosomal subunit.

In terms of biological role, one of the primary rRNA binding proteins, it binds specifically to the 5'-end of 16S ribosomal RNA. In Thermoanaerobacter pseudethanolicus (strain ATCC 33223 / 39E) (Clostridium thermohydrosulfuricum), this protein is Small ribosomal subunit protein uS17.